The following is a 206-amino-acid chain: Protein GrpE (206 aa).

This sequence belongs to the GrpE family. As to quaternary structure, homodimer.

It is found in the cytoplasm. Participates actively in the response to hyperosmotic and heat shock by preventing the aggregation of stress-denatured proteins, in association with DnaK and GrpE. It is the nucleotide exchange factor for DnaK and may function as a thermosensor. Unfolded proteins bind initially to DnaJ; upon interaction with the DnaJ-bound protein, DnaK hydrolyzes its bound ATP, resulting in the formation of a stable complex. GrpE releases ADP from DnaK; ATP binding to DnaK triggers the release of the substrate protein, thus completing the reaction cycle. Several rounds of ATP-dependent interactions between DnaJ, DnaK and GrpE are required for fully efficient folding. In Psychromonas ingrahamii (strain DSM 17664 / CCUG 51855 / 37), this protein is Protein GrpE.